The primary structure comprises 332 residues: Capsular polysaccharide phosphotransferase WcwK (332 aa).

Belongs to the stealth family.

The polypeptide is Capsular polysaccharide phosphotransferase WcwK (wcwK) (Streptococcus pneumoniae).